Consider the following 606-residue polypeptide: Threonine dehydratase 1 biosynthetic, chloroplastic (606 aa).

Lys154 carries the N6-(pyridoxal phosphate)lysine modification. 2 consecutive ACT-like domains span residues 432–504 (AVLA…NLTD) and 526–597 (LLCR…MESL).

It belongs to the serine/threonine dehydratase family. The cofactor is pyridoxal 5'-phosphate. In terms of tissue distribution, expressed constitutively in all tissues examined including root, stem, petiole, leaf, immature flower bud, unopened flower and opened flower with the highest expression in opened flower and lowest in leaf.

The protein localises to the plastid. It is found in the chloroplast. It catalyses the reaction L-threonine = 2-oxobutanoate + NH4(+). It participates in amino-acid biosynthesis; L-isoleucine biosynthesis; 2-oxobutanoate from L-threonine: step 1/1. With respect to regulation, strongly inhibited by 1 mM isoleucine. Functionally, has a housekeeping role in isoleucine biosynthesis. This Solanum lycopersicum (Tomato) protein is Threonine dehydratase 1 biosynthetic, chloroplastic.